Consider the following 393-residue polypeptide: Glycocyamine kinase (393 aa).

A Phosphagen kinase N-terminal domain is found at 7 to 94; that stretch reads REKFAKENFP…FDRVIEEIHH (88 aa). In terms of domain architecture, Phosphagen kinase C-terminal spans 120–362; sequence YVKSCRIRCG…NVLIEADKRL (243 aa). Residues 123–127, H186, R231, 287–291, 315–320, and D330 contribute to the ATP site; these read SCRIR, RASVH, and RGTGGE. Positions 367 to 393 are disordered; sequence PIDDLTPRLNSSTGTSISATASRHMTL. Low complexity predominate over residues 377–393; that stretch reads SSTGTSISATASRHMTL.

It belongs to the ATP:guanido phosphotransferase family. As to quaternary structure, monomer.

The catalysed reaction is guanidinoacetate + ATP = phosphoguanidinoacetate + ADP + H(+). The polypeptide is Glycocyamine kinase (Hediste diversicolor (Sandworm)).